A 382-amino-acid chain; its full sequence is Histidinol-phosphate aminotransferase (382 aa).

An N6-(pyridoxal phosphate)lysine modification is found at Lys-215. The interval 360 to 382 (NSNNIDNQSKTHSQTSSIRKGTI) is disordered.

The protein belongs to the class-II pyridoxal-phosphate-dependent aminotransferase family. Histidinol-phosphate aminotransferase subfamily. As to quaternary structure, homodimer. It depends on pyridoxal 5'-phosphate as a cofactor.

The catalysed reaction is L-histidinol phosphate + 2-oxoglutarate = 3-(imidazol-4-yl)-2-oxopropyl phosphate + L-glutamate. It participates in amino-acid biosynthesis; L-histidine biosynthesis; L-histidine from 5-phospho-alpha-D-ribose 1-diphosphate: step 7/9. The sequence is that of Histidinol-phosphate aminotransferase from Yersinia pseudotuberculosis serotype IB (strain PB1/+).